A 54-amino-acid chain; its full sequence is Ovomucoid (54 aa).

Residues 4-54 (VDCSEYPKPACTLEYRPLCGSDSKTYGNKCNFCNAVVESNGTLTLSHFGKC) form the Kazal-like domain. 3 disulfide bridges follow: C6-C36, C14-C33, and C22-C54. Residue N43 is glycosylated (N-linked (GlcNAc...) asparagine).

Its subcellular location is the secreted. This is Ovomucoid from Alectoris chukar (Chukar partridge).